A 498-amino-acid polypeptide reads, in one-letter code: Oligopeptide transport system permease protein AmiC (498 aa).

6 consecutive transmembrane segments (helical) span residues 12 to 32 (SLVS…TLVP), 279 to 299 (MIVS…ALAV), 316 to 336 (LSTG…VYIV), 359 to 379 (SYVL…AIWI), 415 to 435 (MVPL…GATL), and 461 to 481 (VVGL…LGDI). The ABC transmembrane type-1 domain maps to 280–479 (IVSSAITGLI…CISIFSRLLG (200 aa)).

It belongs to the binding-protein-dependent transport system permease family. OppBC subfamily.

It is found in the cell membrane. Its function is as follows. Part of the binding-protein-dependent transport system for oligopeptides; probably responsible for the translocation of the substrate across the membrane. The sequence is that of Oligopeptide transport system permease protein AmiC (amiC) from Streptococcus pneumoniae serotype 4 (strain ATCC BAA-334 / TIGR4).